Reading from the N-terminus, the 270-residue chain is MSDQQQLPVYKIALGIEYDGSKYYGWQRQNEVRSVQEKLEKALSQVANEPITVFCAGRTDAGVHGTGQVVHFETTAQRKDAAWTLGVNANLPGDIAVRWVKAVPDDFHARFSATARRYRYIIYNHRLRPAVLSKGVTHFYEPLDAERMHRAAQCLLGENDFTSFRAVQCQSRTPWRNVMHINVTRHGPYVVVDIKANAFVHHMVRNIVGSLMEVGAHNQPESWIAELLAAKDRTLAAATAKAEGLYLVAVDYPDRYDLPKPPMGPLFLAD.

D60 (nucleophile) is an active-site residue. The RNA binding stretch occupies residues 107 to 111; that stretch reads FHARF. Y118 is a substrate binding site. An interaction with tRNA region spans residues 168-172; the sequence is QCQSR.

Belongs to the tRNA pseudouridine synthase TruA family. Homodimer.

The catalysed reaction is uridine(38/39/40) in tRNA = pseudouridine(38/39/40) in tRNA. Functionally, formation of pseudouridine at positions 38, 39 and 40 in the anticodon stem and loop of transfer RNAs. This Shigella boydii serotype 18 (strain CDC 3083-94 / BS512) protein is tRNA pseudouridine synthase A.